The following is a 377-amino-acid chain: tRNA(Met) cytidine acetate ligase (377 aa).

ATP is bound by residues 7–20 (ITEY…HLYH), Gly101, Asn152, and Arg179.

It belongs to the TmcAL family.

The protein localises to the cytoplasm. It catalyses the reaction cytidine(34) in elongator tRNA(Met) + acetate + ATP = N(4)-acetylcytidine(34) in elongator tRNA(Met) + AMP + diphosphate. In terms of biological role, catalyzes the formation of N(4)-acetylcytidine (ac(4)C) at the wobble position of elongator tRNA(Met), using acetate and ATP as substrates. First activates an acetate ion to form acetyladenylate (Ac-AMP) and then transfers the acetyl group to tRNA to form ac(4)C34. This Oenococcus oeni (strain ATCC BAA-331 / PSU-1) protein is tRNA(Met) cytidine acetate ligase.